Here is an 82-residue protein sequence, read N- to C-terminus: Putative antitoxin RelB1 (82 aa).

Its function is as follows. Antitoxin component of a type II toxin-antitoxin (TA) system. Its cognate toxin is RelE1 (Potential). The protein is Putative antitoxin RelB1 (relB1) of Methanocaldococcus jannaschii (strain ATCC 43067 / DSM 2661 / JAL-1 / JCM 10045 / NBRC 100440) (Methanococcus jannaschii).